Here is a 1032-residue protein sequence, read N- to C-terminus: Probable ATP-dependent RNA helicase DDX46 (1032 aa).

The segment covering 1-24 (MGRESRHYRKRSASRGRSGSRSRS) has biased composition (basic residues). A disordered region spans residues 1–228 (MGRESRHYRK…EMEGEELDPL (228 aa)). Residue G2 is the site of N-myristoyl glycine attachment. Residues 26-49 (SPSDKRSKRGDDRRSRSRDRDRRR) are compositionally biased toward basic and acidic residues. 2 stretches are compositionally biased toward basic residues: residues 50-73 (ERSRSRDKRRSRSRDRKRLRRSRS) and 81-103 (ERRRSRSRDRRRSRSRSRGRRSR). Over residues 112 to 200 (KKTENRSRSK…EMKQGKKWSL (89 aa)) the composition is skewed to basic and acidic residues. Residues 152 to 197 (DQNKLEEEMRKRKERVEKWREEQRKKAMENIGELKKEIEEMKQGKK) are a coiled coil. Residue K186 forms a Glycyl lysine isopeptide (Lys-Gly) (interchain with G-Cter in SUMO2) linkage. S199 carries the post-translational modification Phosphoserine. 2 stretches are compositionally biased toward acidic residues: residues 201 to 211 (EDDDDDEDDPA) and 219 to 228 (EMEGEELDPL). N6-acetyllysine is present on K263. Y294 is subject to Phosphotyrosine. Residues S295 and S296 each carry the phosphoserine modification. Residue K325 forms a Glycyl lysine isopeptide (Lys-Gly) (interchain with G-Cter in SUMO2) linkage. Phosphoserine is present on S346. The Q motif signature appears at 372–400 (KSWVQCGISMKILNSLKKHGYEKPTPIQT). The Helicase ATP-binding domain maps to 403–581 (IPAIMSGRDL…RRILSKPIEV (179 aa)). 416–423 (AKTGSGKT) contacts ATP. The short motif at 529–532 (DEAD) is the DEAD box element. Residues 592-753 (DVEQQVIVIE…AVPPDLEKLW (162 aa)) enclose the Helicase C-terminal domain. K776 is subject to N6-acetyllysine. A Glycyl lysine isopeptide (Lys-Gly) (interchain with G-Cter in SUMO2) cross-link involves residue K779. Phosphoserine is present on S804. At K904 the chain carries N6-acetyllysine. Residues K908 and K916 each participate in a glycyl lysine isopeptide (Lys-Gly) (interchain with G-Cter in SUMO2) cross-link. Phosphoserine is present on S929.

Belongs to the DEAD box helicase family. DDX46/PRP5 subfamily. In terms of assembly, component of the 17S U2 SnRNP complex, a ribonucleoprotein complex that contains small nuclear RNA (snRNA) U2 and a number of specific proteins. Within the 17S U2 SnRNP complex, DDX46 is part of the SF3B subcomplex, which is required for 'A' complex assembly formed by the stable binding of U2 snRNP to the branchpoint sequence in pre-mRNA. Recruited to the 17S U2 SnRNP complex following release of DDX42; DDX42 and DDX46 bind the SF3B subcomplex in a competitive manner.

It is found in the nucleus speckle. Its subcellular location is the nucleus. The protein localises to the cajal body. It catalyses the reaction ATP + H2O = ADP + phosphate + H(+). Its function is as follows. Component of the 17S U2 SnRNP complex of the spliceosome, a large ribonucleoprotein complex that removes introns from transcribed pre-mRNAs. The 17S U2 SnRNP complex (1) directly participates in early spliceosome assembly and (2) mediates recognition of the intron branch site during pre-mRNA splicing by promoting the selection of the pre-mRNA branch-site adenosine, the nucleophile for the first step of splicing. Within the 17S U2 SnRNP complex, DDX46 plays essential roles during assembly of pre-spliceosome and proofreading of the branch site. The chain is Probable ATP-dependent RNA helicase DDX46 (DDX46) from Pongo abelii (Sumatran orangutan).